Consider the following 147-residue polypeptide: UPF0275 protein PM0504 (147 aa).

The protein belongs to the UPF0275 family.

This is UPF0275 protein PM0504 from Pasteurella multocida (strain Pm70).